Here is a 649-residue protein sequence, read N- to C-terminus: Lysophospholipase (649 aa).

The N-terminal stretch at Met-1–Ala-21 is a signal peptide. N-linked (GlcNAc...) asparagine glycans are attached at residues Asn-32, Asn-51, Asn-77, Asn-90, Asn-121, Asn-158, Asn-168, Asn-213, Asn-275, Asn-343, Asn-386, Asn-457, Asn-487, Asn-511, Asn-539, Asn-563, and Asn-580. Residues Ser-34 to Asp-584 enclose the PLA2c domain.

Belongs to the lysophospholipase family.

Its subcellular location is the secreted. It carries out the reaction a 1-acyl-sn-glycero-3-phosphocholine + H2O = sn-glycerol 3-phosphocholine + a fatty acid + H(+). Catalyzes the release of fatty acids from lysophospholipids. The polypeptide is Lysophospholipase (Torulaspora delbrueckii (Yeast)).